Consider the following 935-residue polypeptide: Progesterone receptor (935 aa).

The tract at residues 1–49 is disordered; the sequence is MTELKAKGXRAPHVAGSPSSPKVXSPLPCRQAAXPFPGSQTSDTLPEVS. The tract at residues 1–164 is AF3; mediates transcriptional activation; it reads MTELKAKGXR…SATQRVLSRL (164 aa). Residues 1-568 form a modulating, Pro-Rich region; that stretch reads MTELKAKGXR…YSFESLPQKI (568 aa). Residues 17–28 show a composition bias toward low complexity; sequence SPSSPKVXSPLP. Serine 20 is modified (phosphoserine). Positions 55–59 match the LXXL motif 1 motif; it reads LDGLL. A disordered region spans residues 61 to 255; it reads PRICQGQDPP…GAAAGGGAAA (195 aa). Serine 81 bears the Phosphoserine mark. An LXXL motif 2 motif is present at residues 115-119; it reads LDTLW. Phosphoserine occurs at positions 130 and 162. Positions 165–305 are mediates transcriptional transrepression; sequence MSRSGGKAGD…LATTVTDFIH (141 aa). Positions 183–187 match the Nuclear localization signal motif; the sequence is KVLPR. At serine 190 the chain carries Phosphoserine. Over residues 191 to 203 the composition is skewed to polar residues; that stretch reads PSRQLLLPTTGSP. Serine 213 is subject to Phosphoserine. Acidic residues predominate over residues 220 to 231; sequence EVEEEDGSESED. The span at 232–246 shows a compositional bias: low complexity; it reads SAGPLLKGKPRALGG. Serine 294 bears the Phosphoserine; by MAPK1 mark. A disordered region spans residues 331-365; the sequence is GGAGAASAFAPPRSSPSASSTPVPGGDFPDCAYAP. Residues 335–356 show a composition bias toward low complexity; sequence AASAFAPPRSSPSASSTPVPGG. Position 345 is a phosphoserine; by MAPK (serine 345). Residue lysine 388 forms a Glycyl lysine isopeptide (Lys-Gly) (interchain with G-Cter in SUMO); alternate linkage. Residue lysine 388 forms a Glycyl lysine isopeptide (Lys-Gly) (interchain with G-Cter in ubiquitin); alternate linkage. Serine 400 is modified (phosphoserine; by CDK2). The interval 415–452 is disordered; that stretch reads PDFPLGPPPPLPPRAPPSRPGEAAVTAAPASASVSSAS. Positions 418–433 are enriched in pro residues; sequence PLGPPPPLPPRAPPSR. A compositionally biased stretch (low complexity) spans 434-452; sequence PGEAAVTAAPASASVSSAS. An AF1; mediates transcriptional activation region spans residues 456-548; that stretch reads STLECILYKA…VYPPYLNYLR (93 aa). Lysine 533 is covalently cross-linked (Glycyl lysine isopeptide (Lys-Gly) (interchain with G-Cter in SUMO)). 2 NR C4-type zinc fingers span residues 569 to 589 and 605 to 629; these read CLICGDEASGCHYGVLTCGSC and CAGRNDCIVDKIRRKNCPACRLRKC. The segment at residues 569-641 is a DNA-binding region (nuclear receptor); that stretch reads CLICGDEASG…AGMVLGGRKF (73 aa). Residue serine 678 is modified to Phosphoserine. Residues 681 to 915 enclose the NR LBD domain; it reads QDIQLIPPLI…EFPEMMSEVI (235 aa). The tract at residues 689–935 is AF2; mediates transcriptional activation; the sequence is LINLLLSIEP…MVKPLLFHKK (247 aa).

This sequence belongs to the nuclear hormone receptor family. As to quaternary structure, interacts with SMARD1 and UNC45A. Interacts with CUEDC2; the interaction promotes ubiquitination, decreases sumoylation, and represses transcriptional activity. Interacts with PIAS3; the interaction promotes sumoylation of PR in a hormone-dependent manner, inhibits DNA-binding, and alters nuclear export. Interacts with SP1; the interaction requires ligand-induced phosphorylation on Ser-345 by ERK1/2-MAPK. Interacts with PRMT2. Interacts with NCOA2 and NCOA1. Interacts with KLF9. Interacts with GTF2B. In terms of processing, phosphorylated on multiple serine sites. Several of these sites are hormone-dependent. Phosphorylation on Ser-294 is highly hormone-dependent and modulates ubiquitination and sumoylation on Lys-388. Phosphorylation on Ser-345 also requires induction by hormone. Basal phosphorylation on Ser-81, Ser-162, Ser-190 and Ser-400 is increased in response to progesterone and can be phosphorylated in vitro by the CDK2-A1 complex. Increased levels of phosphorylation on Ser-400 also in the presence of EGF, heregulin, IGF, PMA and FBS. Phosphorylation at this site by CDK2 is ligand-independent, and increases nuclear translocation and transcriptional activity. Phosphorylation at Ser-162 and Ser-294, but not at Ser-190, is impaired during the G(2)/M phase of the cell cycle. Phosphorylation on Ser-345 by ERK1/2 MAPK is required for interaction with SP1. Sumoylation is hormone-dependent and represses transcriptional activity. Sumoylation on all three sites is enhanced by PIAS3. Desumoylated by SENP1. Sumoylation on Lys-388, the main site of sumoylation, is repressed by ubiquitination on the same site, and modulated by phosphorylation at Ser-294. Post-translationally, ubiquitination is hormone-dependent and represses sumoylation on the same site. Promoted by MAPK-mediated phosphorylation on Ser-294. In terms of processing, palmitoylated by ZDHHC7 and ZDHHC21. Palmitoylation is required for plasma membrane targeting and for rapid intracellular signaling via ERK and AKT kinases and cAMP generation.

The protein resides in the nucleus. Its subcellular location is the cytoplasm. Functionally, the steroid hormones and their receptors are involved in the regulation of eukaryotic gene expression and affect cellular proliferation and differentiation in target tissues. Transcriptional activator of several progesteron-dependent promoters in a variety of cell types. Involved in activation of SRC-dependent MAPK signaling on hormone stimulation. The protein is Progesterone receptor (PGR) of Ateles paniscus (Black spider monkey).